A 228-amino-acid chain; its full sequence is Lipoprotein-releasing system ATP-binding protein LolD (228 aa).

The ABC transporter domain occupies 8-228 (LQAKKLVKAY…ELHDGLLRRL (221 aa)). 44 to 51 (GASGSGKS) is a binding site for ATP.

Belongs to the ABC transporter superfamily. Lipoprotein translocase (TC 3.A.1.125) family. As to quaternary structure, the complex is composed of two ATP-binding proteins (LolD) and two transmembrane proteins (LolC and LolE).

The protein localises to the cell inner membrane. Part of the ABC transporter complex LolCDE involved in the translocation of mature outer membrane-directed lipoproteins, from the inner membrane to the periplasmic chaperone, LolA. Responsible for the formation of the LolA-lipoprotein complex in an ATP-dependent manner. This is Lipoprotein-releasing system ATP-binding protein LolD from Alcanivorax borkumensis (strain ATCC 700651 / DSM 11573 / NCIMB 13689 / SK2).